A 772-amino-acid chain; its full sequence is Uracil catabolism protein 2 (772 aa).

The tract at residues 1-70 is disordered; it reads MDINSNASVS…KKPRKKRKTF (70 aa). Positions 39–51 are enriched in basic and acidic residues; that stretch reads HPEDSARAKERSE. The segment covering 59 to 69 has biased composition (basic residues); it reads GNKKPRKKRKT. The segment at residues 72–101 is a DNA-binding region (zn(2)-C6 fungal-type); the sequence is CDTCRRVKTRCDFEPFIGKCYRCNVLQLDC.

This sequence belongs to the URC2 family.

It is found in the cytoplasm. The protein localises to the nucleus. Probable transcriptional activator involved in uracil catabolism. This chain is Uracil catabolism protein 2 (URC2), found in Saccharomyces cerevisiae (strain ATCC 204508 / S288c) (Baker's yeast).